Reading from the N-terminus, the 89-residue chain is U-scoloptoxin(11)-Sm4a (89 aa).

An N-terminal signal peptide occupies residues 1-17; that stretch reads MFFKLVLVSAVAIQALS.

Belongs to the scoloptoxin-11 family. Post-translationally, contains 3 disulfide bonds. Expressed by the venom gland.

The protein localises to the secreted. This chain is U-scoloptoxin(11)-Sm4a, found in Scolopendra morsitans (Tanzanian blue ringleg centipede).